We begin with the raw amino-acid sequence, 1645 residues long: Protein MON2 homolog (1645 aa).

The protein belongs to the MON2 family.

Its function is as follows. May be required for traffic between late Golgi and early endosomes. This chain is Protein MON2 homolog, found in Caenorhabditis briggsae.